Reading from the N-terminus, the 542-residue chain is MLO-like protein 7 (542 aa).

The Extracellular segment spans residues 1–38 (MITRSRCRRSLLWFLVFHGGATATGAPSGGKELSQTPT). A helical membrane pass occupies residues 39 to 59 (WAVAVVCTFLILISHLLEKGL). Residues 60–82 (QRLANWLWKKHKNSLLEALEKIK) lie on the Cytoplasmic side of the membrane. The helical transmembrane segment at 83–103 (AELMILGFISLLLTFGEPYIL) threads the bilayer. At 104 to 165 (KICVPRKAAL…ITLKGLHQLH (62 aa)) the chain is on the extracellular side. The helical transmembrane segment at 166 to 186 (ILLFFLAIFHIVYSLITMMLS) threads the bilayer. Residues 187–288 (RLKIRGWKKW…IKRSLEDDFK (102 aa)) are Cytoplasmic-facing. The chain crosses the membrane as a helical span at residues 289–309 (LVVGISPVLWASFVIFLLFNV). At 310-315 (NGWRTL) the chain is on the extracellular side. The helical transmembrane segment at 316–336 (FWASIPPLLIILAVGTKLQAI) threads the bilayer. The Cytoplasmic segment spans residues 337-374 (MATMALEIVETHAVVQGMPLVQGSDRYFWFDCPQLLLH). The helical transmembrane segment at 375–395 (LIHFALFQNAFQITHFFWIWY) threads the bilayer. Residues 396 to 414 (SFGLKSCFHKDFNLVVSKL) lie on the Extracellular side of the membrane. Residues 415-435 (FLCLGALILCSYITLPLYALV) form a helical membrane-spanning segment. Topologically, residues 436 to 542 (TQMGSHMKKA…QQQEMQFHNS (107 aa)) are cytoplasmic. The tract at residues 449–470 (EQMAKALKKWHKDIKLKKGKAR) is calmodulin-binding.

The protein belongs to the MLO family. As to expression, restricted to pollen, synergids, pistils and immature anthers. Also detected in seedlings, leaves, stems and inflorescens.

The protein localises to the cell membrane. The protein resides in the endomembrane system. Functionally, may be involved in modulation of pathogen defense and leaf cell death. Activity seems to be regulated by Ca(2+)-dependent calmodulin binding and seems not to require heterotrimeric G proteins. Controls pollen tube reception in the female gametophyte synergids. This is MLO-like protein 7 (MLO7) from Arabidopsis thaliana (Mouse-ear cress).